We begin with the raw amino-acid sequence, 124 residues long: Small ribosomal subunit protein uS12 (124 aa).

D89 is modified (3-methylthioaspartic acid). The segment at 103-124 (DTAGVQKRRQGRSKYGAKRPKS) is disordered. Basic residues predominate over residues 108–124 (QKRRQGRSKYGAKRPKS).

Belongs to the universal ribosomal protein uS12 family. As to quaternary structure, part of the 30S ribosomal subunit. Contacts proteins S8 and S17. May interact with IF1 in the 30S initiation complex.

In terms of biological role, with S4 and S5 plays an important role in translational accuracy. Interacts with and stabilizes bases of the 16S rRNA that are involved in tRNA selection in the A site and with the mRNA backbone. Located at the interface of the 30S and 50S subunits, it traverses the body of the 30S subunit contacting proteins on the other side and probably holding the rRNA structure together. The combined cluster of proteins S8, S12 and S17 appears to hold together the shoulder and platform of the 30S subunit. The polypeptide is Small ribosomal subunit protein uS12 (Methylococcus capsulatus (strain ATCC 33009 / NCIMB 11132 / Bath)).